The primary structure comprises 142 residues: Aspartate 1-decarboxylase (142 aa).

The active-site Schiff-base intermediate with substrate; via pyruvic acid is S25. Pyruvic acid (Ser) is present on S25. T57 provides a ligand contact to substrate. The active-site Proton donor is the Y58. A substrate-binding site is contributed by G73–A75.

This sequence belongs to the PanD family. Heterooctamer of four alpha and four beta subunits. It depends on pyruvate as a cofactor. In terms of processing, is synthesized initially as an inactive proenzyme, which is activated by self-cleavage at a specific serine bond to produce a beta-subunit with a hydroxyl group at its C-terminus and an alpha-subunit with a pyruvoyl group at its N-terminus.

The protein resides in the cytoplasm. The catalysed reaction is L-aspartate + H(+) = beta-alanine + CO2. Its pathway is cofactor biosynthesis; (R)-pantothenate biosynthesis; beta-alanine from L-aspartate: step 1/1. Its function is as follows. Catalyzes the pyruvoyl-dependent decarboxylation of aspartate to produce beta-alanine. This Mycobacterium leprae (strain Br4923) protein is Aspartate 1-decarboxylase.